Reading from the N-terminus, the 144-residue chain is MKSYIAKPHEVERKWYIVDAADKPLGRVASQVASILRGKHKPTYTPHVDTGDNVIVINVEKVVLTGKKLDQKLLRHHSLYPGGLKEIPYREAIAKKPEFVFEEAVRRMLPSGVLGRKMLKKLKVYKGAEHNQEAQKPEVLELRY.

The protein belongs to the universal ribosomal protein uL13 family. In terms of assembly, part of the 50S ribosomal subunit.

In terms of biological role, this protein is one of the early assembly proteins of the 50S ribosomal subunit, although it is not seen to bind rRNA by itself. It is important during the early stages of 50S assembly. In Clostridium botulinum (strain ATCC 19397 / Type A), this protein is Large ribosomal subunit protein uL13.